A 277-amino-acid chain; its full sequence is Basic leucine zipper transcriptional factor ATF-like 2 (277 aa).

Disordered stretches follow at residues 15–50, 126–146, and 191–256; these read LGES…HQQH, FQTP…CSHE, and SFSK…QKSS. Residues 18–81 enclose the bZIP domain; the sequence is SQKQLKKKQK…AGWGRTLHLH (64 aa). Residues 20–42 form a basic motif region; that stretch reads KQLKKKQKNRVAAQRSRQKHTSK. A compositionally biased stretch (basic and acidic residues) spans 41 to 50; the sequence is SKADALHQQH. The segment at 46-67 is leucine-zipper; it reads LHQQHESLEKQNHALRKEIQAL. Polar residues-rich tracts occupy residues 213 to 227 and 247 to 256; these read RQEQ…SSDS and GSSTHWQKSS.

This sequence belongs to the bZIP family. Heterodimer; heterodimerizes with JUN family proteins.

Its subcellular location is the nucleus. In terms of biological role, AP-1 family transcription factor that controls the differentiation of lineage-specific cells in the immune system. Selectively suppresses CCN1 transcription and hence blocks the downstream cell proliferation signals produced by CCN1 and inhibits CCN1-induced anchorage-independent growth and invasion in several cancer types. Possibly acts by interfering with AP-1 binding to CCN1 promoter. Following infection, participates in the differentiation of CD8(+) thymic conventional dendritic cells in the immune system. Acts via the formation of a heterodimer with JUN family proteins that recognizes and binds DNA sequence 5'-TGA[CG]TCA-3' and regulates expression of target genes. The sequence is that of Basic leucine zipper transcriptional factor ATF-like 2 (Batf2) from Mus musculus (Mouse).